The chain runs to 505 residues: ATP synthase subunit alpha (505 aa).

Residue glycine 170 to serine 177 coordinates ATP.

The protein belongs to the ATPase alpha/beta chains family. In terms of assembly, F-type ATPases have 2 components, CF(1) - the catalytic core - and CF(0) - the membrane proton channel. CF(1) has five subunits: alpha(3), beta(3), gamma(1), delta(1), epsilon(1). CF(0) has four main subunits: a(1), b(1), b'(1) and c(9-12).

Its subcellular location is the cellular thylakoid membrane. It catalyses the reaction ATP + H2O + 4 H(+)(in) = ADP + phosphate + 5 H(+)(out). Its function is as follows. Produces ATP from ADP in the presence of a proton gradient across the membrane. The alpha chain is a regulatory subunit. This is ATP synthase subunit alpha from Prochlorococcus marinus (strain MIT 9312).